A 209-amino-acid chain; its full sequence is Thiamine-phosphate synthase (209 aa).

4-amino-2-methyl-5-(diphosphooxymethyl)pyrimidine contacts are provided by residues 40–44 (QLREK) and N72. 2 residues coordinate Mg(2+): D73 and D92. Residue S111 coordinates 4-amino-2-methyl-5-(diphosphooxymethyl)pyrimidine. 137–139 (TNS) lines the 2-[(2R,5Z)-2-carboxy-4-methylthiazol-5(2H)-ylidene]ethyl phosphate pocket. A 4-amino-2-methyl-5-(diphosphooxymethyl)pyrimidine-binding site is contributed by K140. 2-[(2R,5Z)-2-carboxy-4-methylthiazol-5(2H)-ylidene]ethyl phosphate-binding positions include G167 and 187 to 188 (IS).

This sequence belongs to the thiamine-phosphate synthase family. It depends on Mg(2+) as a cofactor.

The catalysed reaction is 2-[(2R,5Z)-2-carboxy-4-methylthiazol-5(2H)-ylidene]ethyl phosphate + 4-amino-2-methyl-5-(diphosphooxymethyl)pyrimidine + 2 H(+) = thiamine phosphate + CO2 + diphosphate. The enzyme catalyses 2-(2-carboxy-4-methylthiazol-5-yl)ethyl phosphate + 4-amino-2-methyl-5-(diphosphooxymethyl)pyrimidine + 2 H(+) = thiamine phosphate + CO2 + diphosphate. It carries out the reaction 4-methyl-5-(2-phosphooxyethyl)-thiazole + 4-amino-2-methyl-5-(diphosphooxymethyl)pyrimidine + H(+) = thiamine phosphate + diphosphate. It participates in cofactor biosynthesis; thiamine diphosphate biosynthesis; thiamine phosphate from 4-amino-2-methyl-5-diphosphomethylpyrimidine and 4-methyl-5-(2-phosphoethyl)-thiazole: step 1/1. In terms of biological role, condenses 4-methyl-5-(beta-hydroxyethyl)thiazole monophosphate (THZ-P) and 2-methyl-4-amino-5-hydroxymethyl pyrimidine pyrophosphate (HMP-PP) to form thiamine monophosphate (TMP). This chain is Thiamine-phosphate synthase, found in Clostridium tetani (strain Massachusetts / E88).